The following is an 823-amino-acid chain: Translation initiation factor IF-2 (823 aa).

Disordered regions lie at residues 30-66 (VPPS…DDKR) and 156-192 (TPSH…IKKV). Residues 36 to 48 (RGTSTGKSFTTVE) are compositionally biased toward polar residues. Positions 56-66 (PGEYISHDDKR) are enriched in basic and acidic residues. One can recognise a tr-type G domain in the interval 322–491 (PRPPVVTVMG…LLLAEMLELS (170 aa)). The segment at 331-338 (GHVDHGKT) is G1. Residue 331–338 (GHVDHGKT) coordinates GTP. A G2 region spans residues 356–360 (GITQH). A G3 region spans residues 377 to 380 (DTPG). GTP is bound by residues 377 to 381 (DTPGH) and 431 to 434 (NKID). Residues 431–434 (NKID) are G4. The interval 467–469 (SAK) is G5.

It belongs to the TRAFAC class translation factor GTPase superfamily. Classic translation factor GTPase family. IF-2 subfamily.

It localises to the cytoplasm. One of the essential components for the initiation of protein synthesis. Protects formylmethionyl-tRNA from spontaneous hydrolysis and promotes its binding to the 30S ribosomal subunits. Also involved in the hydrolysis of GTP during the formation of the 70S ribosomal complex. The sequence is that of Translation initiation factor IF-2 from Anaplasma phagocytophilum (strain HZ).